The sequence spans 1054 residues: Bifunctional cytochrome P450/NADPH--P450 reductase 2 (1054 aa).

A cytochrome P450 region spans residues 1-475 (MKQASAIPQP…QADIKAETKP (475 aa)). Cysteine 403 contributes to the heme binding site. Residues 462 to 480 (QRKEQADIKAETKPKETKP) show a composition bias toward basic and acidic residues. Positions 462–482 (QRKEQADIKAETKPKETKPKH) are disordered. Positions 476–1053 (KETKPKHGTP…RRYVKDVWTG (578 aa)) are NADPH--P450 reductase. The Flavodoxin-like domain occupies 486-625 (LLVLFGSNLG…HRESWENRFW (140 aa)). FMN contacts are provided by residues 492 to 497 (SNLGTA), 539 to 542 (SYNG), 573 to 575 (CGN), and 581 to 583 (TYQ). The FAD-binding FR-type domain occupies 663 to 896 (YGAFEGIVLE…RTPQSGFQMP (234 aa)).

The protein in the N-terminal section; belongs to the cytochrome P450 family. Requires FAD as cofactor. The cofactor is FMN. Heme b serves as cofactor.

It localises to the cytoplasm. The enzyme catalyses an organic molecule + reduced [NADPH--hemoprotein reductase] + O2 = an alcohol + oxidized [NADPH--hemoprotein reductase] + H2O + H(+). The catalysed reaction is 2 oxidized [cytochrome P450] + NADPH = 2 reduced [cytochrome P450] + NADP(+) + H(+). In terms of biological role, functions as a fatty acid monooxygenase. Catalyzes hydroxylation of a range of medium to long-chain fatty acids, with a preference for long-chain unsaturated and branched-chain fatty acids over saturated fatty acids. Hydroxylation of myristic acid occurs mainly at the omega-2 and omega-3 positions, in approximately equal proportions. Also displays a NADPH-dependent reductase activity in the C-terminal domain, which allows electron transfer from NADPH to the heme iron of the cytochrome P450 N-terminal domain. The protein is Bifunctional cytochrome P450/NADPH--P450 reductase 2 of Bacillus subtilis (strain 168).